We begin with the raw amino-acid sequence, 147 residues long: Large ribosomal subunit protein uL15 (147 aa).

The tract at residues 1–46 (MSIRLENLSYTPGARKEKHRKGRGHAAGKGKQAGRGQSGQKKRSTV) is disordered. The segment covering 16–28 (KEKHRKGRGHAAG) has biased composition (basic residues).

It belongs to the universal ribosomal protein uL15 family. As to quaternary structure, part of the 50S ribosomal subunit.

In terms of biological role, binds to the 23S rRNA. This is Large ribosomal subunit protein uL15 from Mesomycoplasma hyopneumoniae (strain J / ATCC 25934 / NCTC 10110) (Mycoplasma hyopneumoniae).